A 240-amino-acid polypeptide reads, in one-letter code: Glyceraldehyde 3-phosphate phosphatase (240 aa).

Belongs to the HAD-like hydrolase superfamily. The cofactor is Mg(2+).

In terms of biological role, catalyzes the dephosphorylation of D,L-glyceraldehyde 3-phosphate in vitro. The protein is Glyceraldehyde 3-phosphate phosphatase of Pyrococcus furiosus (strain ATCC 43587 / DSM 3638 / JCM 8422 / Vc1).